The primary structure comprises 434 residues: Enolase (434 aa).

The substrate site is built by His158 and Glu167. Glu210 acts as the Proton donor in catalysis. Asp245, Glu294, and Asp319 together coordinate Mg(2+). 2 residues coordinate substrate: Glu294 and Asp319. Lys344 serves as the catalytic Proton acceptor. Substrate is bound by residues 371 to 374 (SHRS) and Lys395.

Belongs to the enolase family. Homodimer. Requires Mg(2+) as cofactor.

Its subcellular location is the cytoplasm. It catalyses the reaction (2R)-2-phosphoglycerate = phosphoenolpyruvate + H2O. It functions in the pathway carbohydrate degradation; glycolysis; pyruvate from D-glyceraldehyde 3-phosphate: step 4/5. The chain is Enolase (ENO) from Schistosoma japonicum (Blood fluke).